A 313-amino-acid chain; its full sequence is Olfactory receptor 8C8 (313 aa).

Residues 1-27 (MMQITMENKSSVSEFILMGLTDQPELQ) lie on the Extracellular side of the membrane. Asn-8 carries an N-linked (GlcNAc...) asparagine glycan. The chain crosses the membrane as a helical span at residues 28-48 (LPLFVLFLMNYTATVMGNLTL). Over 49 to 59 (MNLICLNSNLH) the chain is Cytoplasmic. The chain crosses the membrane as a helical span at residues 60 to 80 (TPMYFFLFNLSFIDFCYSMVF). The Extracellular segment spans residues 81 to 96 (TPKMLMSFILEKNTIS). The helical transmembrane segment at 97–117 (FGGCMAQLFFFLFFVNSESYV) threads the bilayer. Residues Cys-100 and Cys-192 are joined by a disulfide bond. The Cytoplasmic portion of the chain corresponds to 118 to 136 (LTAMAYDRYVAICKPLTYK). Residues 137–157 (VIMSPKICCLLIFSSYLMGFA) form a helical membrane-spanning segment. At 158-208 (SAMAHTGCMIRLSFCDSNIINHYMCDIFPLLPLSCSSTYVNELMSSVVVGS) the chain is on the extracellular side. Residues 209-229 (AIILCCLIILISYAMILFNII) form a helical membrane-spanning segment. Topologically, residues 230–239 (HMSSGKGWSK) are cytoplasmic. A helical membrane pass occupies residues 240–260 (ALGTCGSHIITVSLFYGSGLL). The Extracellular segment spans residues 261-274 (AYVKPSSAKTVGQG). A helical membrane pass occupies residues 275 to 295 (KFFSVFYTLLVPMLNPLIYSL). Over 296–313 (RNKDVKLAVKKTWKRITS) the chain is Cytoplasmic.

The protein belongs to the G-protein coupled receptor 1 family. In terms of tissue distribution, expressed in neurons in the olfactory epithelium.

The protein resides in the cell membrane. Functionally, potential odorant receptor. The polypeptide is Olfactory receptor 8C8 (Mus musculus (Mouse)).